The following is a 72-amino-acid chain: Late effector protein 1 (72 aa).

The N-terminal stretch at 1–22 (MKCYLVVVVAALCTLVAQGSVG) is a signal peptide. A glycan (N-linked (GlcNAc...) asparagine) is linked at asparagine 66.

This sequence belongs to the lep1 family. As to quaternary structure, interacts at the cell wall with secreted rep1 repellent peptides.

Its subcellular location is the secreted. It is found in the cell wall. Functionally, core effector contributing to spore formation and tumor formation at the host plant. Modulates surface hydrophobicity promoting cell-cell or cell-surface contacts. Lep1 and rep1 interact in aerial hyphae to form a strong hydrophobic layer. Plays a crucial role in hyphal aggregation that might be a prerequisite for strong proliferation of diploid cells and for induction of the morphological changes associated with spore formation. The chain is Late effector protein 1 from Sporisorium reilianum (strain SRZ2) (Maize head smut fungus).